Consider the following 314-residue polypeptide: L-lactate dehydrogenase (314 aa).

NAD(+)-binding positions include Val17, Asp38, Lys43, Tyr69, and 83–84 (GA). Residues Gln86 and Arg92 each coordinate substrate. NAD(+) is bound by residues Ser105, 122 to 124 (ASN), and Ser147. 124–127 (NPVD) contributes to the substrate binding site. 152–155 (DSAR) provides a ligand contact to substrate. Arg157 and His172 together coordinate beta-D-fructose 1,6-bisphosphate. His179 functions as the Proton acceptor in the catalytic mechanism. Tyr223 carries the post-translational modification Phosphotyrosine. Thr232 contacts substrate.

Belongs to the LDH/MDH superfamily. LDH family. As to quaternary structure, homotetramer.

It is found in the cytoplasm. It catalyses the reaction (S)-lactate + NAD(+) = pyruvate + NADH + H(+). It functions in the pathway fermentation; pyruvate fermentation to lactate; (S)-lactate from pyruvate: step 1/1. Its activity is regulated as follows. Allosterically activated by fructose 1,6-bisphosphate (FBP). Its function is as follows. Catalyzes the conversion of lactate to pyruvate. In Corynebacterium glutamicum (strain ATCC 13032 / DSM 20300 / JCM 1318 / BCRC 11384 / CCUG 27702 / LMG 3730 / NBRC 12168 / NCIMB 10025 / NRRL B-2784 / 534), this protein is L-lactate dehydrogenase.